We begin with the raw amino-acid sequence, 206 residues long: Probable N-acetyltransferase 14 (206 aa).

The N-acetyltransferase domain maps to 6–206 (LSVREMREDE…MLVREFSKDL (201 aa)). Residues 57–77 (FILASFALALLLPVFLAVAAV) form a helical membrane-spanning segment.

It belongs to the camello family.

The protein resides in the membrane. Functionally, probable acetyltransferase that binds the 5'-GGACTACAG-3' sequence of coproporphyrinogen oxidase promoter. Able to activate transcription of a reporter construct in vitro. In terms of biological role, probable acetyltransferase. Its function is as follows. May act as a transcription factor regulating the expression of coproporphyrinogen oxidase by binding to a promoter regulatory element. In Mus musculus (Mouse), this protein is Probable N-acetyltransferase 14 (Nat14).